We begin with the raw amino-acid sequence, 160 residues long: SsrA-binding protein (160 aa).

It belongs to the SmpB family.

It localises to the cytoplasm. In terms of biological role, required for rescue of stalled ribosomes mediated by trans-translation. Binds to transfer-messenger RNA (tmRNA), required for stable association of tmRNA with ribosomes. tmRNA and SmpB together mimic tRNA shape, replacing the anticodon stem-loop with SmpB. tmRNA is encoded by the ssrA gene; the 2 termini fold to resemble tRNA(Ala) and it encodes a 'tag peptide', a short internal open reading frame. During trans-translation Ala-aminoacylated tmRNA acts like a tRNA, entering the A-site of stalled ribosomes, displacing the stalled mRNA. The ribosome then switches to translate the ORF on the tmRNA; the nascent peptide is terminated with the 'tag peptide' encoded by the tmRNA and targeted for degradation. The ribosome is freed to recommence translation, which seems to be the essential function of trans-translation. The sequence is that of SsrA-binding protein from Shewanella amazonensis (strain ATCC BAA-1098 / SB2B).